A 141-amino-acid polypeptide reads, in one-letter code: uncharacterized protein (141 aa).

Residues 1–101 form a disordered region; it reads FRGRAPRPLV…PDPGRSRRAT (101 aa). A compositionally biased stretch (basic and acidic residues) spans 27 to 70; the sequence is QVRDCGREGDLRAGKAADRRLPRARETCSRFGEGVRQKDVHKGP.

This is an uncharacterized protein from Dhori virus (strain Indian/1313/61) (Dho).